The chain runs to 1849 residues: UPF0606 protein KIAA1549L (1849 aa).

A compositionally biased stretch (polar residues) spans 1–10 (MDHTASQNAQ). Disordered stretches follow at residues 1-70 (MDHT…LLQL), 142-166 (ATANDSANPLHLSAAPENSRGPALS), 213-242 (PTENHASPSPVPEMPTLPAEGSDGSPPATR), and 529-586 (RHSV…ERNA). Composition is skewed to polar residues over residues 529-541 (RHSVSHPQLQLPN) and 552-586 (PGPTSTGSLQEMLSDGTDTGSEISSDINSSPERNA). Residues 958–986 (KFAQTMEQRLQKAFQDAERKVLNTKSNLT) adopt a coiled-coil conformation. The helical transmembrane segment at 1180–1200 (LWIIAAVLAPIAVVTVIIIII) threads the bilayer. Disordered regions lie at residues 1258–1338 (LPIR…EEEG), 1460–1546 (SKNR…SQPS), 1656–1679 (RSTSDIGSKTRMAESTGPEPAQLH), and 1769–1819 (SRYP…APLT). Composition is skewed to polar residues over residues 1290–1319 (PSENGSVISNESGKPSSGRRSPQNVMAQQK), 1463–1482 (RQQMKNSVYRSRQSLNSPSP), and 1537–1546 (ETSTLSSQPS). Composition is skewed to low complexity over residues 1769–1786 (SRYPQSSPSRLPRQYSQP) and 1795–1809 (QAPAPSTAASQQSLA).

The protein belongs to the UPF0606 family.

It localises to the membrane. The sequence is that of UPF0606 protein KIAA1549L (KIAA1549L) from Homo sapiens (Human).